Reading from the N-terminus, the 290-residue chain is 4-diphosphocytidyl-2-C-methyl-D-erythritol kinase (290 aa).

The active site involves Lys-11. An ATP-binding site is contributed by 97-107 (PVAAGIGGGSS). Asp-139 is a catalytic residue.

It belongs to the GHMP kinase family. IspE subfamily.

It carries out the reaction 4-CDP-2-C-methyl-D-erythritol + ATP = 4-CDP-2-C-methyl-D-erythritol 2-phosphate + ADP + H(+). The protein operates within isoprenoid biosynthesis; isopentenyl diphosphate biosynthesis via DXP pathway; isopentenyl diphosphate from 1-deoxy-D-xylulose 5-phosphate: step 3/6. Catalyzes the phosphorylation of the position 2 hydroxy group of 4-diphosphocytidyl-2C-methyl-D-erythritol. The sequence is that of 4-diphosphocytidyl-2-C-methyl-D-erythritol kinase from Methylobacterium radiotolerans (strain ATCC 27329 / DSM 1819 / JCM 2831 / NBRC 15690 / NCIMB 10815 / 0-1).